Reading from the N-terminus, the 260-residue chain is Lipid II isoglutaminyl synthase (glutamine-hydrolyzing) subunit GatD (260 aa).

The GATase cobBQ-type domain occupies 16–214 (QLNIAHLYGN…FHGPILSRNA (199 aa)). The Nucleophile role is filled by Cys-107. Arg-142 contacts substrate. The active site involves His-206.

Belongs to the CobB/CobQ family. GatD subfamily. In terms of assembly, forms a heterodimer with MurT.

It catalyses the reaction beta-D-GlcNAc-(1-&gt;4)-Mur2Ac(oyl-L-Ala-gamma-D-Glu-L-Lys-D-Ala-D-Ala)-di-trans,octa-cis-undecaprenyl diphosphate + L-glutamine + ATP + H2O = beta-D-GlcNAc-(1-&gt;4)-Mur2Ac(oyl-L-Ala-D-isoglutaminyl-L-Lys-D-Ala-D-Ala)-di-trans,octa-cis-undecaprenyl diphosphate + L-glutamate + ADP + phosphate + H(+). The enzyme catalyses L-glutamine + H2O = L-glutamate + NH4(+). Its pathway is cell wall biogenesis; peptidoglycan biosynthesis. Its function is as follows. The lipid II isoglutaminyl synthase complex catalyzes the formation of alpha-D-isoglutamine in the cell wall lipid II stem peptide. The GatD subunit catalyzes the hydrolysis of glutamine to glutamate and ammonia. The resulting ammonia molecule is channeled to the active site of MurT. This Streptococcus pneumoniae (strain ATCC BAA-255 / R6) protein is Lipid II isoglutaminyl synthase (glutamine-hydrolyzing) subunit GatD.